Consider the following 148-residue polypeptide: D-aminoacyl-tRNA deacylase (148 aa).

Positions glycine 137–proline 138 match the Gly-cisPro motif, important for rejection of L-amino acids motif.

It belongs to the DTD family. As to quaternary structure, homodimer.

It localises to the cytoplasm. The catalysed reaction is glycyl-tRNA(Ala) + H2O = tRNA(Ala) + glycine + H(+). It catalyses the reaction a D-aminoacyl-tRNA + H2O = a tRNA + a D-alpha-amino acid + H(+). In terms of biological role, an aminoacyl-tRNA editing enzyme that deacylates mischarged D-aminoacyl-tRNAs. Also deacylates mischarged glycyl-tRNA(Ala), protecting cells against glycine mischarging by AlaRS. Acts via tRNA-based rather than protein-based catalysis; rejects L-amino acids rather than detecting D-amino acids in the active site. By recycling D-aminoacyl-tRNA to D-amino acids and free tRNA molecules, this enzyme counteracts the toxicity associated with the formation of D-aminoacyl-tRNA entities in vivo and helps enforce protein L-homochirality. The sequence is that of D-aminoacyl-tRNA deacylase from Aquifex aeolicus (strain VF5).